The primary structure comprises 317 residues: N(5)-(carboxyethyl)ornithine synthase (317 aa).

Pyruvate-binding residues include Arg-15, Lys-71, and His-92. An NADP(+)-binding site is contributed by 172–177; that stretch reads GSGNVS.

This sequence belongs to the AlaDH/PNT family. CEOS subfamily. As to quaternary structure, homotetramer.

It carries out the reaction N(5)-[1(S)-1-carboxyethyl]-L-ornithine + NADP(+) + H2O = L-ornithine + pyruvate + NADPH + H(+). Catalyzes the NADPH-dependent reductive condensation between pyruvic acid and the side chain amino group of L-ornithine to form N(5)-(L-1-carboxyethyl)-L-ornithine. To a lesser extent, can also use L-lysine as substrate (yielding N(6)-(L-1-carboxyethyl)-L-lysine), and the D-isomers of the 2 basic amino acids. Can use alpha-keto acids other than pyruvate, e.g. glyoxylate. The protein is N(5)-(carboxyethyl)ornithine synthase (ceo) of Clostridium botulinum (strain Hall / ATCC 3502 / NCTC 13319 / Type A).